The sequence spans 463 residues: V-type proton ATPase subunit S1 (463 aa).

An N-terminal signal peptide occupies residues 1–32 (MMAATVVSRIRTGTRWAPVLWLLLSLVAVAAA). A propeptide spanning residues 33–225 (VAAEQQVPLV…TAVRPSRVAR (193 aa)) is cleaved from the precursor. At 33–412 (VAAEQQVPLV…EQFSYASDCA (380 aa)) the chain is on the lumenal side. N-linked (GlcNAc...) asparagine glycosylation is found at Asn-164, Asn-255, Asn-267, Asn-290, Asn-297, Asn-344, Asn-351, and Asn-399. Residues 413 to 433 (GFFSPGIWMGLLTTLFMLFIF) traverse the membrane as a helical segment. The Cytoplasmic segment spans residues 434–463 (TYGLHMILSLKTMDRFDDRKGPTITLTQIV).

The protein belongs to the vacuolar ATPase subunit S1 family. Accessory component of the multisubunit proton-transporting vacuolar (V)-ATPase protein pump. Interacts (via N-terminus) with ATP6AP2 (via N-terminus). Interacts with RNASEK. Interacts with TMEM106B (via C-terminus). Post-translationally, N-glycosylated. Expressed in brain (at protein level).

The protein resides in the endoplasmic reticulum membrane. It localises to the endoplasmic reticulum-Golgi intermediate compartment membrane. The protein localises to the cytoplasmic vesicle. It is found in the secretory vesicle. Its subcellular location is the synaptic vesicle membrane. The protein resides in the clathrin-coated vesicle membrane. Its function is as follows. Accessory subunit of the proton-transporting vacuolar (V)-ATPase protein pump, which is required for luminal acidification of secretory vesicles. Guides the V-type ATPase into specialized subcellular compartments, such as neuroendocrine regulated secretory vesicles or the ruffled border of the osteoclast, thereby regulating its activity. Involved in membrane trafficking and Ca(2+)-dependent membrane fusion. May play a role in the assembly of the V-type ATPase complex. In aerobic conditions, involved in intracellular iron homeostasis, thus triggering the activity of Fe(2+) prolyl hydroxylase (PHD) enzymes, and leading to HIF1A hydroxylation and subsequent proteasomal degradation. In islets of Langerhans cells, may regulate the acidification of dense-core secretory granules. The protein is V-type proton ATPase subunit S1 (Atp6ap1) of Rattus norvegicus (Rat).